Consider the following 88-residue polypeptide: Apolipoprotein C-I (88 aa).

The N-terminal stretch at 1–26 (MRLFLSLPVLVVVLAMVLEGPAPTQA) is a signal peptide.

The protein belongs to the apolipoprotein C1 family.

It localises to the secreted. Inhibitor of lipoprotein binding to the low density lipoprotein (LDL) receptor, LDL receptor-related protein, and very low density lipoprotein (VLDL) receptor. Associates with high density lipoproteins (HDL) and the triacylglycerol-rich lipoproteins in the plasma and makes up about 10% of the protein of the VLDL and 2% of that of HDL. Appears to interfere directly with fatty acid uptake and is also the major plasma inhibitor of cholesteryl ester transfer protein (CETP). Binds free fatty acids and reduces their intracellular esterification. Modulates the interaction of APOE with beta-migrating VLDL and inhibits binding of beta-VLDL to the LDL receptor-related protein. The sequence is that of Apolipoprotein C-I (APOC1) from Phoca vitulina (Harbor seal).